Reading from the N-terminus, the 581-residue chain is Suppressor of cytokine signaling 7 (581 aa).

Disordered stretches follow at residues 1–23 (MVFR…EPGP), 89–109 (PPPP…DPTE), 123–272 (EAES…RTQS), and 297–316 (QRGL…RRSL). 3 stretches are compositionally biased toward pro residues: residues 89 to 99 (PPPPQPQPPAA), 154 to 164 (PPGPELPPVPF), and 187 to 198 (QPPPPPPPPGPL). Positions 124–494 (AESLETNSCS…GKFLYFLRSR (371 aa)) are mediates interaction with SORBS3. Over residues 208–219 (GSFKIRLSRLFR) the composition is skewed to basic residues. The span at 303 to 313 (PHPPTPPPPPR) shows a compositional bias: pro residues. Positions 400-509 (WYWGPMNWED…PTPVQLLYPV (110 aa)) constitute an SH2 domain. The SOCS box domain maps to 504–554 (QLLYPVSRFSNVKSLQHLCRFRIRQLVRIDHIPDLPLPKPLISYIRKFYYY).

Substrate-recognition component of the ECS(SOCS7) complex, composed of SOCS7, CUL5, ELOB, ELOC and RNF7/RBX2. Interacts, via the third proline-rich region, with the second SH3 domain of the adapter protein NCK1. Also interacts with GRB2, INSR, PLCG1, SORBS3/vinexin, and phosphorylated STAT3 and STAT5. Interacts with SEPT6. Interacts with phosphorylated IRS4 and PIK3R1. As to expression, expressed in brain and leukocytes. Also in fetal lung fibroblasts and fetal brain.

The protein localises to the cytoplasm. It is found in the nucleus. It localises to the cell membrane. Its pathway is protein modification; protein ubiquitination. Its function is as follows. Substrate-recognition component of a cullin-5-RING E3 ubiquitin-protein ligase complex (ECS complex, also named CRL5 complex), which mediates the ubiquitination and subsequent proteasomal degradation of target proteins, such as DAB1 and IRS1. Specifically recognizes and binds phosphorylated proteins via its SH2 domain, promoting their ubiquitination. The ECS(SOCS7) complex acts as a key regulator of reelin signaling by mediating ubiquitination and degradation of phosphorylated DAB1 in the cortical plate of the developing cerebral cortex, thereby regulating neuron positioning during cortex development. Functions in insulin signaling and glucose homeostasis through IRS1 ubiquitination and subsequent proteasomal degradation. Also inhibits prolactin, growth hormone and leptin signaling by preventing STAT3 and STAT5 activation, sequestering them in the cytoplasm and reducing their binding to DNA. The sequence is that of Suppressor of cytokine signaling 7 from Homo sapiens (Human).